The following is a 146-amino-acid chain: Large ribosomal subunit protein uL15 (146 aa).

Basic and acidic residues predominate over residues 1–13 (MKLHELKPAEGSR). The disordered stretch occupies residues 1–57 (MKLHELKPAEGSRKVRNRVGRGTSSGNGKTSGRGQKGQKARSGVGLRPGFEGGQTPL). Residues 23–35 (TSSGNGKTSGRGQ) show a composition bias toward gly residues.

The protein belongs to the universal ribosomal protein uL15 family. As to quaternary structure, part of the 50S ribosomal subunit.

Binds to the 23S rRNA. This Streptococcus thermophilus (strain CNRZ 1066) protein is Large ribosomal subunit protein uL15.